Consider the following 564-residue polypeptide: Poly(U)-binding-splicing factor PUF60 (564 aa).

The interval 1-521 (MATATIALQV…EDAEIIVKIF (521 aa)) is inhibits homodimerization. Residues 37 to 61 (KWKPPQGTESIKMENGQSTGTKLGL) are disordered. A Glycyl lysine isopeptide (Lys-Gly) (interchain with G-Cter in SUMO2) cross-link involves residue Lys-48. Thr-65 is subject to Phosphothreonine. The segment at 82-564 (QSIKSVLVKQ…ERFDNSDLSA (483 aa)) is inhibits transcriptional repression, interaction with ERCC3 and apoptosis induction. A Glycyl lysine isopeptide (Lys-Gly) (interchain with G-Cter in SUMO2) cross-link involves residue Lys-85. Residue Ser-117 is modified to Phosphoserine. RRM domains follow at residues 134-212 (CRVY…RPSN) and 231-309 (NRIY…KAVT). Residue Ser-249 is modified to Phosphoserine. An N6-acetyllysine modification is found at Lys-256. Thr-319 is modified (phosphothreonine). Residues 421 to 442 (KKEKEEEELFPESERPEMLSEQ) form a disordered region. Lys-424 is covalently cross-linked (Glycyl lysine isopeptide (Lys-Gly) (interchain with G-Cter in SUMO2)). Basic and acidic residues predominate over residues 432–442 (ESERPEMLSEQ). An N6-acetyllysine modification is found at Lys-459. Lys-463 is covalently cross-linked (Glycyl lysine isopeptide (Lys-Gly) (interchain with G-Cter in SUMO2)). The RRM 3; atypical domain occupies 467-554 (TVMVLRNMVD…RKVVAEVYDQ (88 aa)).

It belongs to the RRM half pint family. As to quaternary structure, homodimer. Associates with the spliceosome. Found in a complex with RO60 and Y5 RNA. Found in a complex with FUBP1 and far upstream element (FUSE) DNA segment. Interacts directly with ERCC3. Interacts with CDK7 and GTF2H1. Interacts with SRSF11/P54. Interacts with ARGLU1; interaction may be involved in ARGLU1-mediated modulation of alternative splicing.

The protein resides in the nucleus. In terms of biological role, DNA- and RNA-binding protein, involved in several nuclear processes such as pre-mRNA splicing, apoptosis and transcription regulation. In association with FUBP1 regulates MYC transcription at the P2 promoter through the core-TFIIH basal transcription factor. Acts as a transcriptional repressor through the core-TFIIH basal transcription factor. Represses FUBP1-induced transcriptional activation but not basal transcription. Decreases ERCC3 helicase activity. Is also involved in pre-mRNA splicing. Promotes splicing of an intron with weak 3'-splice site and pyrimidine tract in a cooperative manner with U2AF2. Involved in apoptosis induction when overexpressed in HeLa cells. Modulates alternative splicing of several mRNAs. Binds to relaxed DNA of active promoter regions. Binds to the pyrimidine tract and 3'-splice site regions of pre-mRNA; binding is enhanced in presence of U2AF2. Binds to Y5 RNA in association with RO60. Binds to poly(U) RNA. The polypeptide is Poly(U)-binding-splicing factor PUF60 (Rattus norvegicus (Rat)).